The primary structure comprises 473 residues: Argininosuccinate lyase (473 aa).

The protein belongs to the lyase 1 family. Argininosuccinate lyase subfamily.

The protein localises to the cytoplasm. It catalyses the reaction 2-(N(omega)-L-arginino)succinate = fumarate + L-arginine. It functions in the pathway amino-acid biosynthesis; L-arginine biosynthesis; L-arginine from L-ornithine and carbamoyl phosphate: step 3/3. In Bordetella pertussis (strain Tohama I / ATCC BAA-589 / NCTC 13251), this protein is Argininosuccinate lyase.